Reading from the N-terminus, the 181-residue chain is Adenylate kinase (181 aa).

7-15 lines the ATP pocket; sequence GVAGVGKTT.

Belongs to the archaeal adenylate kinase family.

It localises to the cytoplasm. It catalyses the reaction AMP + ATP = 2 ADP. The protein is Adenylate kinase (adkA) of Thermoplasma volcanium (strain ATCC 51530 / DSM 4299 / JCM 9571 / NBRC 15438 / GSS1).